A 71-amino-acid chain; its full sequence is Long neurotoxin 1 (71 aa).

5 cysteine pairs are disulfide-bonded: Cys-3-Cys-21, Cys-14-Cys-42, Cys-27-Cys-31, Cys-46-Cys-57, and Cys-58-Cys-63.

This sequence belongs to the three-finger toxin family. Long-chain subfamily. Type II alpha-neurotoxin sub-subfamily. Expressed by the venom gland.

It localises to the secreted. Functionally, binds with high affinity to muscular (alpha-1/CHRNA1) and neuronal (alpha-7/CHRNA7) nicotinic acetylcholine receptor (nAChR) and inhibits acetylcholine from binding to the receptor, thereby impairing neuromuscular and neuronal transmission. The protein is Long neurotoxin 1 of Naja melanoleuca (Forest cobra).